The sequence spans 386 residues: RNA polymerase sigma factor SigA (386 aa).

A sigma-70 factor domain-2 region spans residues 154-224; sequence LAEANLRLVV…TRAIADQART (71 aa). Positions 178 to 181 match the Interaction with polymerase core subunit RpoC motif; that stretch reads DLIQ. The interval 233–309 is sigma-70 factor domain-3; that stretch reads ETINKLIRVQ…DDVIESPVDY (77 aa). Positions 322-375 are sigma-70 factor domain-4; it reads VMDTLTDREENVLRMRFGLDDGRMHTLEDVGKQFKVTRERIRQIEAKAIKKLRH. The segment at residues 348–367 is a DNA-binding region (H-T-H motif); sequence LEDVGKQFKVTRERIRQIEA.

This sequence belongs to the sigma-70 factor family. RpoD/SigA subfamily. As to quaternary structure, interacts transiently with the RNA polymerase catalytic core.

Its subcellular location is the cytoplasm. Functionally, sigma factors are initiation factors that promote the attachment of RNA polymerase to specific initiation sites and are then released. This sigma factor is the primary sigma factor during exponential growth. In Lactococcus lactis subsp. lactis (strain IL1403) (Streptococcus lactis), this protein is RNA polymerase sigma factor SigA.